A 380-amino-acid polypeptide reads, in one-letter code: MEEGGDFDNYYGADNQSECEYTDWKSSGALIPAIYMLVFLLGTTGNGLVLWTVFRSSREKRRSADIFIASLAVADLTFVVTLPLWATYTYRDYDWPFGTFSCKLSSYLIFVNMYASVFCLTGLSFDRYLAIVRPVANARLRLRVSGAVATAVLWVLAALLAMPVMVFRTTGDLENTTKVQCYMDYSMVATVSSDWAWEVGLGVSSTTVGFVVPFTIMLTCYFFIAQTIAGHFRKERIEGLRKRRRLLSIIVVLVVTFALCWMPYHLVKTLYMLGSLLHWPCDFDLFLMNVFPYCTCISYVNSCLNPFLYAFFDPRFRQACTSMLCCGQSRCAGTSHSSSGEKSASYSSGHSQGPGPNMGKGGEQMHEKSIPYSQETLVVD.

Residues 1–30 (MEEGGDFDNYYGADNQSECEYTDWKSSGAL) are Extracellular-facing. N-linked (GlcNAc...) asparagine glycosylation is present at Asn-15. Cystine bridges form between Cys-19/Cys-281 and Cys-102/Cys-181. The chain crosses the membrane as a helical span at residues 31–54 (IPAIYMLVFLLGTTGNGLVLWTVF). Residues 55-64 (RSSREKRRSA) are Cytoplasmic-facing. Residues 65–86 (DIFIASLAVADLTFVVTLPLWA) form a helical membrane-spanning segment. At 87 to 99 (TYTYRDYDWPFGT) the chain is on the extracellular side. Residues 100–125 (FSCKLSSYLIFVNMYASVFCLTGLSF) form a helical membrane-spanning segment. Residues 126–146 (DRYLAIVRPVANARLRLRVSG) are Cytoplasmic-facing. A helical membrane pass occupies residues 147–164 (AVATAVLWVLAALLAMPV). Residues 165-198 (MVFRTTGDLENTTKVQCYMDYSMVATVSSDWAWE) are Extracellular-facing. A glycan (N-linked (GlcNAc...) asparagine) is linked at Asn-175. Residues 199 to 223 (VGLGVSSTTVGFVVPFTIMLTCYFF) form a helical membrane-spanning segment. Topologically, residues 224 to 246 (IAQTIAGHFRKERIEGLRKRRRL) are cytoplasmic. The helical transmembrane segment at 247-270 (LSIIVVLVVTFALCWMPYHLVKTL) threads the bilayer. The Extracellular segment spans residues 271–289 (YMLGSLLHWPCDFDLFLMN). The chain crosses the membrane as a helical span at residues 290–312 (VFPYCTCISYVNSCLNPFLYAFF). The Cytoplasmic portion of the chain corresponds to 313-380 (DPRFRQACTS…PYSQETLVVD (68 aa)). Over residues 342–351 (KSASYSSGHS) the composition is skewed to low complexity. The segment at 342–380 (KSASYSSGHSQGPGPNMGKGGEQMHEKSIPYSQETLVVD) is disordered. Polar residues predominate over residues 371–380 (PYSQETLVVD).

This sequence belongs to the G-protein coupled receptor 1 family. In terms of assembly, homodimer; dimerization inhibits APLNR-mediated G protein and beta-arrestin signaling pathways compared to monomeric APLNR.

It is found in the cell membrane. Functionally, g protein-coupled receptor for peptide hormones apelin (APLN) and apelin receptor early endogenous ligand (APELA/ELA), that plays a role in the regulation of normal cardiovascular function and fluid homeostasis. When acting as apelin receptor, activates both G(i) protein pathway that inhibits adenylate cyclase activity, and the beta-arrestin pathway that promotes internalization of the receptor. APLNR/APJ also functions as mechanoreceptor that is activated by pathological stimuli in a G-protein-independent fashion to induce beta-arrestin signaling, hence eliciting cardiac hypertrophy. However, the presence of apelin ligand blunts cardiac hypertrophic induction from APLNR/APJ on response to pathological stimuli. Plays a key role in early development such as gastrulation, blood vessels formation and heart morphogenesis by acting as a APELA receptor. May promote angioblast migration toward the embryonic midline, i.e. the position of the future vessel formation, during vasculogenesis. Promotes sinus venosus (SV)-derived endothelial cells migration into the developing heart to promote coronary blood vessel development. Also plays a role in various processes in adults such as regulation of blood vessel formation, blood pressure, heart contractility and heart failure. In terms of biological role, (Microbial infection) Alternative coreceptor with CD4 for HIV-1 infection; may be involved in the development of AIDS dementia. The chain is Apelin receptor (APLNR) from Macaca mulatta (Rhesus macaque).